The chain runs to 202 residues: LexA repressor (202 aa).

Residues serine 123 and lysine 159 each act as for autocatalytic cleavage activity in the active site.

This sequence belongs to the peptidase S24 family. As to quaternary structure, homodimer.

The catalysed reaction is Hydrolysis of Ala-|-Gly bond in repressor LexA.. Its function is as follows. Binds the consensus sequence 5'-TGTTC-N(4)-GAACA-3'; some genes have a tandem consensus sequence, at high concentrations their binding is cooperative. Binds to the promoters of a number of genes, including dinB, imuA, lexA, recA, recQ, splB and uvrA. Represses a number of genes involved in the response to DNA damage (SOS response). In the presence of single-stranded DNA, RecA interacts with LexA causing an autocatalytic cleavage which disrupts the DNA-binding part of LexA, leading to derepression of the SOS regulon and eventually DNA repair. The sequence is that of LexA repressor from Verrucomicrobium spinosum (strain ATCC 43997 / DSM 4136 / JCM 18804 / IFAM 1439).